A 579-amino-acid chain; its full sequence is 6-deoxy-6-sulfo-D-gluconate dehydratase (579 aa).

[4Fe-4S] cluster is bound by residues Cys-59, Cys-127, and Cys-200.

Belongs to the IlvD/Edd family. As to quaternary structure, homodimer. [4Fe-4S] cluster serves as cofactor.

It carries out the reaction 6-deoxy-6-sulfo-D-gluconate = 2-dehydro-3,6-dideoxy-6-sulfo-D-gluconate + H2O. Its function is as follows. Catalyzes the dehydration of 6-deoxy-6-sulfo-D-gluconate to 2-dehydro-3,6-dideoxy-6-sulfo-D-gluconate. Is involved in a degradation pathway of sulfoquinovose (SQ) that allows P.putida SQ1 to use SQ as the sole carbon and energy source for growth. The sequence is that of 6-deoxy-6-sulfo-D-gluconate dehydratase from Pseudomonas putida (Arthrobacter siderocapsulatus).